Reading from the N-terminus, the 104-residue chain is Snakin-2 (104 aa).

Positions 1–23 are cleaved as a signal peptide; it reads MAISKALFASLLLSLLLLEQVQS. Residues 24–38 constitute a propeptide, removed in mature form; that stretch reads IQTDQVTSNAISEAA.

It belongs to the GASA family. Post-translationally, six disulfide bonds may be present. As to expression, expressed in tubers, stems, flowers, shoot apex and leaves, but not in roots or stolons.

The protein resides in the secreted. It localises to the cell wall. Has an antimicrobial activity. Causes a rapid aggregation of both Gram-positive and Gram-negative bacteria, but the antimicrobial activity is not correlated with the capacity to aggregate bacteria. The sequence is that of Snakin-2 (SN2) from Solanum tuberosum (Potato).